Here is a 509-residue protein sequence, read N- to C-terminus: Probable cytosol aminopeptidase (509 aa).

2 residues coordinate Mn(2+): lysine 277 and aspartate 282. Lysine 289 is an active-site residue. Aspartate 300, aspartate 359, and glutamate 361 together coordinate Mn(2+). Residue arginine 363 is part of the active site.

The protein belongs to the peptidase M17 family. Mn(2+) serves as cofactor.

Its subcellular location is the cytoplasm. The enzyme catalyses Release of an N-terminal amino acid, Xaa-|-Yaa-, in which Xaa is preferably Leu, but may be other amino acids including Pro although not Arg or Lys, and Yaa may be Pro. Amino acid amides and methyl esters are also readily hydrolyzed, but rates on arylamides are exceedingly low.. It carries out the reaction Release of an N-terminal amino acid, preferentially leucine, but not glutamic or aspartic acids.. In terms of biological role, presumably involved in the processing and regular turnover of intracellular proteins. Catalyzes the removal of unsubstituted N-terminal amino acids from various peptides. The polypeptide is Probable cytosol aminopeptidase (Chloroherpeton thalassium (strain ATCC 35110 / GB-78)).